A 70-amino-acid chain; its full sequence is Large ribosomal subunit protein eL38 (70 aa).

K4 is covalently cross-linked (Glycyl lysine isopeptide (Lys-Gly) (interchain with G-Cter in SUMO2)). The residue at position 9 (K9) is an N6-acetyllysine; alternate. K9 is covalently cross-linked (Glycyl lysine isopeptide (Lys-Gly) (interchain with G-Cter in SUMO2); alternate). K67 is modified (N6-acetyllysine).

The protein belongs to the eukaryotic ribosomal protein eL38 family. As to quaternary structure, component of the large ribosomal subunit.

It localises to the cytoplasm. In terms of biological role, component of the large ribosomal subunit. The ribosome is a large ribonucleoprotein complex responsible for the synthesis of proteins in the cell. In Macaca fascicularis (Crab-eating macaque), this protein is Large ribosomal subunit protein eL38 (RPL38).